The primary structure comprises 421 residues: Protein MID1-COMPLEMENTING ACTIVITY 1 (421 aa).

Residues 188 to 218 (RFCEALKTENEKLQIELQRSQEHYDVAQCEV) are a coiled coil. Residues 233–288 (EPDSEKELTKKASKKSERSSSMKTEYSYDEDSPKKSSTRAASRSTSNVSSGHDLLS) are disordered. Residues 235 to 252 (DSEKELTKKASKKSERSS) are compositionally biased toward basic and acidic residues. Residues 270-282 (TRAASRSTSNVSS) show a composition bias toward low complexity. A helical membrane pass occupies residues 346 to 362 (LMAYSLILSCCCYTCCV).

Expressed in roots, leaves, stems, flowers and siliques. Expressed in vascular tissues of cotyledons, leaves and primary root, in the promeristem and adjacent elongation zone of the primary root and in the shoot apical meristem. Detected in the stele and endodermis, but not in the cortex, epidermis or root cap, including the columella. Not expressed in root hairs or in mesophyll cells of leaves and cotyledons.

The protein localises to the cell membrane. With respect to regulation, inhibited by GdCl(3), but not by verapamil. Calcium-permeable stretch-activated channel component. Involved in mechano-stimulated calcium uptake mechanism and in mechanosensing in the primary root. The chain is Protein MID1-COMPLEMENTING ACTIVITY 1 (MCA1) from Arabidopsis thaliana (Mouse-ear cress).